Consider the following 334-residue polypeptide: Ventral anterior homeobox 1 (334 aa).

A compositionally biased stretch (basic and acidic residues) spans 1–34 (MFGKPDKMDVRCHSDAEAARVSKNAHKESRESKG). Residues 1–41 (MFGKPDKMDVRCHSDAEAARVSKNAHKESRESKGAEGNLPA) form a disordered region. Positions 100–159 (PKRTRTSFTAEQLYRLEMEFQRCQYVVGRERTELARQLNLSETQVKVWFQNRRTKQKKDQ) form a DNA-binding region, homeobox. Disordered stretches follow at residues 234 to 263 (PGPA…GLHA) and 314 to 334 (SAFE…KALD). The span at 323–334 (NNKEGAEKKALD) shows a compositional bias: basic and acidic residues.

It belongs to the EMX homeobox family.

It is found in the nucleus. In terms of biological role, transcription factor that may function in dorsoventral specification of the forebrain. Required for axon guidance and major tract formation in the developing forebrain. May contribute to the differentiation of the neuroretina, pigmented epithelium and optic stalk. This chain is Ventral anterior homeobox 1 (VAX1), found in Homo sapiens (Human).